A 106-amino-acid chain; its full sequence is Large ribosomal subunit protein eL42 (106 aa).

Basic residues predominate over residues 1-29; sequence MVNIPKTRRTYCKGKACRKHTPHKVTQYK. Positions 1 to 56 are disordered; sequence MVNIPKTRRTYCKGKACRKHTPHKVTQYKKGKDSLSAQGKRRYDRKQSGYGGQTKP.

The protein belongs to the eukaryotic ribosomal protein eL42 family.

The chain is Large ribosomal subunit protein eL42 (RPL44) from Cryptococcus neoformans var. neoformans serotype D (strain B-3501A) (Filobasidiella neoformans).